Consider the following 233-residue polypeptide: Probable fimbrial chaperone protein ElfD (233 aa).

The first 26 residues, 1–26 (MKTCITKGIVTVSLTAILLSCSSAWA), serve as a signal peptide directing secretion.

The protein belongs to the periplasmic pilus chaperone family.

It localises to the periplasm. In terms of biological role, part of the elfADCG-ycbUVF fimbrial operon, which promotes adhesion of bacteria to different abiotic surfaces. Could be required for the biogenesis of the ElfA fimbriae. The sequence is that of Probable fimbrial chaperone protein ElfD (elfD) from Escherichia coli (strain K12).